Reading from the N-terminus, the 657-residue chain is 1-deoxy-D-xylulose-5-phosphate synthase (657 aa).

Residues His-73 and 113–115 contribute to the thiamine diphosphate site; that span reads SHA. Asp-145 contributes to the Mg(2+) binding site. Thiamine diphosphate-binding positions include 146 to 147, Asn-175, Tyr-293, and Glu-375; that span reads GA. Asn-175 is a binding site for Mg(2+).

This sequence belongs to the transketolase family. DXPS subfamily. Homodimer. The cofactor is Mg(2+). It depends on thiamine diphosphate as a cofactor.

The enzyme catalyses D-glyceraldehyde 3-phosphate + pyruvate + H(+) = 1-deoxy-D-xylulose 5-phosphate + CO2. The protein operates within metabolic intermediate biosynthesis; 1-deoxy-D-xylulose 5-phosphate biosynthesis; 1-deoxy-D-xylulose 5-phosphate from D-glyceraldehyde 3-phosphate and pyruvate: step 1/1. In terms of biological role, catalyzes the acyloin condensation reaction between C atoms 2 and 3 of pyruvate and glyceraldehyde 3-phosphate to yield 1-deoxy-D-xylulose-5-phosphate (DXP). The chain is 1-deoxy-D-xylulose-5-phosphate synthase from Pseudarthrobacter chlorophenolicus (strain ATCC 700700 / DSM 12829 / CIP 107037 / JCM 12360 / KCTC 9906 / NCIMB 13794 / A6) (Arthrobacter chlorophenolicus).